We begin with the raw amino-acid sequence, 368 residues long: Peptide chain release factor 2 (368 aa).

At Gln249 the chain carries N5-methylglutamine.

It belongs to the prokaryotic/mitochondrial release factor family. In terms of processing, methylated by PrmC. Methylation increases the termination efficiency of RF2.

The protein localises to the cytoplasm. Peptide chain release factor 2 directs the termination of translation in response to the peptide chain termination codons UGA and UAA. In Rhodococcus erythropolis (strain PR4 / NBRC 100887), this protein is Peptide chain release factor 2.